Reading from the N-terminus, the 207-residue chain is Ras-related protein Rab-8B (207 aa).

The GTP site is built by serine 17, glycine 18, valine 19, glycine 20, lysine 21, threonine 22, cysteine 23, threonine 35, serine 39, and threonine 40. Residue threonine 22 coordinates Mg(2+). 2 consecutive short sequence motifs (switch) follow at residues aspartate 31–phenylalanine 45 and aspartate 63–glycine 80. Threonine 40 and aspartate 63 together coordinate Mg(2+). Glycine 66 serves as a coordination point for GTP. Threonine 72 carries the phosphothreonine modification. Asparagine 121, lysine 122, aspartate 124, alanine 152, and lysine 153 together coordinate GTP. Phosphoserine occurs at positions 180 and 183. Position 204 is a cysteine methyl ester (cysteine 204). Residue cysteine 204 is the site of S-geranylgeranyl cysteine attachment. Positions leucine 205–leucine 207 are cleaved as a propeptide — removed in mature form.

It belongs to the small GTPase superfamily. Rab family. In terms of assembly, associated with actin, delta-catenin and alpha and beta tubulins. Interacts with OTOF. Interacts with PEX5R. Interacts with RAB3IP. Interacts with VIM. Interacts with CDH1. Interacts with MICALL2. Interacts with GDI1, GDI2, CHML and CHM; phosphorylation at Thr-72 disrupts these interactions. Interacts with MICAL1. The cofactor is Mg(2+). Phosphorylation of Thr-72 in the switch II region by LRRK2 prevents the association of RAB regulatory proteins, including CHM, CHML and RAB GDP dissociation inhibitors GDI1 and GDI2.

It localises to the cell membrane. It is found in the cytoplasmic vesicle. The protein localises to the phagosome membrane. The protein resides in the endosome membrane. It carries out the reaction GTP + H2O = GDP + phosphate + H(+). With respect to regulation, regulated by guanine nucleotide exchange factors (GEFs) including RAB3IP/RABIN8 which promotes the exchange of bound GDP for free GTP. Regulated by GTPase activating proteins (GAPs) which increase the GTP hydrolysis activity. Inhibited by GDP dissociation inhibitors (GDIs). The small GTPases Rab are key regulators of intracellular membrane trafficking, from the formation of transport vesicles to their fusion with membranes. Rabs cycle between an inactive GDP-bound form and an active GTP-bound form that is able to recruit to membranes different sets of downstream effectors directly responsible for vesicle formation, movement, tethering and fusion. RAB8B may be involved in polarized vesicular trafficking and neurotransmitter release. May participate in cell junction dynamics in Sertoli cells. May also participate in the export of a subset of neosynthesized proteins through a Rab8-Rab10-Rab11-dependent endososomal export route. The polypeptide is Ras-related protein Rab-8B (RAB8B) (Bos taurus (Bovine)).